We begin with the raw amino-acid sequence, 179 residues long: Large ribosomal subunit protein uL10 (179 aa).

The protein belongs to the universal ribosomal protein uL10 family. Part of the ribosomal stalk of the 50S ribosomal subunit. The N-terminus interacts with L11 and the large rRNA to form the base of the stalk. The C-terminus forms an elongated spine to which L12 dimers bind in a sequential fashion forming a multimeric L10(L12)X complex.

Functionally, forms part of the ribosomal stalk, playing a central role in the interaction of the ribosome with GTP-bound translation factors. In Thermotoga neapolitana (strain ATCC 49049 / DSM 4359 / NBRC 107923 / NS-E), this protein is Large ribosomal subunit protein uL10.